Reading from the N-terminus, the 2349-residue chain is Reducing polyketide synthase hmp8 (2349 aa).

A Ketosynthase family 3 (KS3) domain is found at 9-435 (HVPVAIIGLA…GTNGHVVLEA (427 aa)). Residues Cys-182, His-317, and His-357 each act as for beta-ketoacyl synthase activity in the active site. A malonyl-CoA:ACP transacylase (MAT) domain region spans residues 551–856 (FVFTGQGAQW…SHNGIKNVAY (306 aa)). Positions 930-1066 (RSLIGAPVPM…GLVAIDYEES (137 aa)) are N-terminal hotdog fold. The 321-residue stretch at 930 to 1250 (RSLIGAPVPM…TSELDMDSGK (321 aa)) folds into the PKS/mFAS DH domain. Residues 932 to 1244 (LIGAPVPMMA…SVKDFRTSEL (313 aa)) form a dehydratase (DH) domain region. The active-site Proton acceptor; for dehydratase activity is His-962. The tract at residues 1094 to 1250 (PEHYAHDKFY…TSELDMDSGK (157 aa)) is C-terminal hotdog fold. Catalysis depends on Asp-1160, which acts as the Proton donor; for dehydratase activity. The enoyl reductase (ER) domain stretch occupies residues 1641–1953 (GLLDTLKFVP…QGKHRGKMVL (313 aa)). Positions 1977-2157 (ATYLFVGGLG…ISVNLGIMRD (181 aa)) are ketoreductase (KR) domain. The Carrier domain maps to 2267–2344 (EAAEIITDAL…SFAVKIAEKS (78 aa)). Ser-2304 bears the O-(pantetheine 4'-phosphoryl)serine mark.

It participates in secondary metabolite biosynthesis. Reducing polyketide synthase; part of the gene cluster that mediates the biosynthesis of hypothemycin, a resorcylic acid lactone (RAL) that irreversibly inhibits a subset of protein kinases with a conserved cysteine in the ATP binding site such as human ERK2. The first step is performed by both PKSs hmp3 and hmp8 and leads to the production of 7',8'-dehydrozearalenol (DHZ). The highly reducing PKS hpm8 synthesizes the reduced hexaketide (7S,11S,2E,8E)-7,11-dihydroxy-dodeca-2,8-dienoate, which is transferred downstream to the non-reducing PKS hpm3. Hpm3 then extends the reduced hexaketide to a nonaketide, after which regioselective cyclization and macrolactonization affords DHZ. The next step is the conversion of DHZ into aigialomycin C and is performed by the O-methyltransferase hmp5, the FAD-binding monooxygenase hmp7, and the cytochrome P450 monooxygenase hmp1. The wide substrate tolerance of the hmp5 and hmp7 implies that the reactions from DHZ to aigialomycin C can occur in any order. The steps from aigialomycin C to hypothemycin are less well established. The FAD-linked oxidoreductase hmp9 presumably catalyzes oxidation of the C-6' hydroxyl to a ketone. The timing of this oxidation is important, since the resulting enone functional group is a Michael acceptor that can react spontaneously with glutathione, an abundant metabolite in fungal cells. The glutathione S-transferase hmp2 catalyzes cis-trans isomerization of the 7',8' double bond with equilibrium favoring the trans isomer. The hpm6-encoded transporter might preferentially pump hypothemycin out of the cell relative to the trans isomer aigialomycin A. The cis-to-trans isomerization may be coupled with C-4' hydroxylation, since all known hypothemycin analogs containing the enone functional group also have hydroxyl groups at both C-4' and C-5'. The sequence is that of Reducing polyketide synthase hmp8 from Hypomyces subiculosus (Nectria subiculosa).